We begin with the raw amino-acid sequence, 77 residues long: MAKLSCSYFFILMLVFSALLMVECDEGKRCHTTIDKGNFCDLVDCRLSCFSGYNGVGKCFDDPKVPGRSNCGCLYNC.

The first 24 residues, 1–24 (MAKLSCSYFFILMLVFSALLMVEC), serve as a signal peptide directing secretion. Disulfide bonds link Cys-30–Cys-77, Cys-40–Cys-59, Cys-45–Cys-71, and Cys-49–Cys-73.

It belongs to the DEFL family.

The protein resides in the secreted. The chain is Putative defensin-like protein 160 (LCR26) from Arabidopsis thaliana (Mouse-ear cress).